The sequence spans 356 residues: MADAAVIEKLEAGFKKLEAATDCKSLLKKYLTKEVFDKLKDKRTSLGATLLDVIQSGVENLDSGVGIYAPDAEAYTLFAPLFDPIIEDYHVGFKQTDKHPNKDFGDVNSFVNVDPEGKFVISTRVRCGRSLQGYPFNPCLTESQYKEMEAKVSSTLSSLEGELKGTYYPLTGMSKEVQQKLIDDHFLFKEGDRFLQAANACRYWPAGRGIYHNDNKTFLVWVNEEDHLRIISMQMGGDLGQVFRRLTSAVNEIEKRIPFSHHDRLGFLTFCPTNLGTTVRASVHIKLPKLAANREKLEEVAGKYNLQVRGTRGEHTEAEGGIYDISNKRRMGLTEFQAVKEMQDGILELIKIEKEM.

In terms of domain architecture, Phosphagen kinase N-terminal spans 9-91 (KLEAGFKKLE…FDPIIEDYHV (83 aa)). 64-68 (GVGIY) is an L-arginine binding site. A Phosphagen kinase C-terminal domain is found at 119-356 (FVISTRVRCG…LELIKIEKEM (238 aa)). Residues 122-126 (STRVR) and histidine 185 contribute to the ATP site. Residue glutamate 225 coordinates L-arginine. Arginine 229 contributes to the ATP binding site. Position 271 (cysteine 271) interacts with L-arginine. Residues 280–284 (RASVH) and 309–314 (RGTRGE) each bind ATP. An L-arginine-binding site is contributed by glutamate 314.

It belongs to the ATP:guanido phosphotransferase family. As to quaternary structure, monomer. In terms of tissue distribution, muscle (at protein level).

It carries out the reaction L-arginine + ATP = N(omega)-phospho-L-arginine + ADP + H(+). The enzyme catalyses dTDP + ATP = dTTP + ADP. Functionally, catalyzes the reversible transfer of high energy ATP gamma-phosphate group to L-arginine. Has nucleoside diphosphate kinase-like activity toward dTDP. Binds and phosphorylates dTDP using ATP as a phosphate donor. Does not phosphorylate dADP, dCDP, dGDP, dTMP or thymidine. This is Arginine kinase Lit v 2.0101 from Penaeus vannamei (Whiteleg shrimp).